A 128-amino-acid chain; its full sequence is Cytochrome c-type biogenesis protein CcmE (128 aa).

Residues 1–8 are Cytoplasmic-facing; the sequence is MQKRVRNR. The helical; Signal-anchor for type II membrane protein transmembrane segment at 9-29 threads the bilayer; sequence LITIIICFCSACLGISIILYN. The Periplasmic segment spans residues 30–128; it reads LEKNIVFFLP…KHDENYRPPQ (99 aa). Heme-binding residues include histidine 120 and tyrosine 124.

This sequence belongs to the CcmE/CycJ family.

It is found in the cell inner membrane. In terms of biological role, heme chaperone required for the biogenesis of c-type cytochromes. Transiently binds heme delivered by CcmC and transfers the heme to apo-cytochromes in a process facilitated by CcmF and CcmH. In Rickettsia conorii (strain ATCC VR-613 / Malish 7), this protein is Cytochrome c-type biogenesis protein CcmE.